Here is a 398-residue protein sequence, read N- to C-terminus: Deoxyguanosinetriphosphate triphosphohydrolase-like protein (398 aa).

An HD domain is found at 68-215; that stretch reads RLTHTLEVAQ…AAISDDIAYD (148 aa).

It belongs to the dGTPase family. Type 2 subfamily.

In Azorhizobium caulinodans (strain ATCC 43989 / DSM 5975 / JCM 20966 / LMG 6465 / NBRC 14845 / NCIMB 13405 / ORS 571), this protein is Deoxyguanosinetriphosphate triphosphohydrolase-like protein.